A 132-amino-acid polypeptide reads, in one-letter code: Fibroblast growth factor 1 (132 aa).

Heparin is bound by residues Asn10 and 108-120 (KTKP…FGQK).

The protein belongs to the heparin-binding growth factors family.

It is found in the secreted. Its subcellular location is the cytoplasm. It localises to the cell cortex. The protein localises to the cytosol. The protein resides in the nucleus. Plays an important role in the regulation of cell survival, cell division, angiogenesis, cell differentiation and cell migration. Functions as a potent mitogen in vitro. Acts as a ligand for FGFR1 and integrins. Binds to FGFR1 in the presence of heparin leading to FGFR1 dimerization and activation via sequential autophosphorylation on tyrosine residues which act as docking sites for interacting proteins, leading to the activation of several signaling cascades. Binds to integrins. Its binding to integrins and subsequent ternary complex formation with integrins and FGFR1 are essential for FGF1 signaling. This chain is Fibroblast growth factor 1 (fgf1), found in Notophthalmus viridescens (Eastern newt).